The following is a 181-amino-acid chain: tRNA-splicing endonuclease (181 aa).

Catalysis depends on residues Tyr-118, His-126, and Lys-157.

Belongs to the tRNA-intron endonuclease family. Archaeal short subfamily. Homotetramer; although the tetramer contains four active sites, only two participate in the cleavage. Therefore, it should be considered as a dimer of dimers.

The catalysed reaction is pretRNA = a 3'-half-tRNA molecule with a 5'-OH end + a 5'-half-tRNA molecule with a 2',3'-cyclic phosphate end + an intron with a 2',3'-cyclic phosphate and a 5'-hydroxyl terminus.. In terms of biological role, endonuclease that removes tRNA introns. Cleaves pre-tRNA at the 5'- and 3'-splice sites to release the intron. The products are an intron and two tRNA half-molecules bearing 2',3' cyclic phosphate and 5'-OH termini. Recognizes a pseudosymmetric substrate in which 2 bulged loops of 3 bases are separated by a stem of 4 bp. The protein is tRNA-splicing endonuclease of Hyperthermus butylicus (strain DSM 5456 / JCM 9403 / PLM1-5).